Here is a 124-residue protein sequence, read N- to C-terminus: Large ribosomal subunit protein bL21 (124 aa).

The disordered stretch occupies residues 105-124 (TVKAEPKSKRAPAPEAAADA). Residues 115–124 (APAPEAAADA) show a composition bias toward low complexity.

The protein belongs to the bacterial ribosomal protein bL21 family. Part of the 50S ribosomal subunit. Contacts protein L20.

Functionally, this protein binds to 23S rRNA in the presence of protein L20. The sequence is that of Large ribosomal subunit protein bL21 from Xanthobacter autotrophicus (strain ATCC BAA-1158 / Py2).